Here is a 650-residue protein sequence, read N- to C-terminus: Cytosolic Fe-S cluster assembly factor NAR1 (650 aa).

Residues Cys22, Cys81, Cys84, Cys87, Cys215, Cys270, Cys480, and Cys484 each coordinate [4Fe-4S] cluster.

Belongs to the NARF family.

In terms of biological role, component of the cytosolic Fe/S protein assembly machinery. Required for maturation of extramitochondrial Fe/S proteins. May play a role in the transfer of pre-assembled Fe/S clusters to target apoproteins. In Cryptococcus neoformans var. neoformans serotype D (strain JEC21 / ATCC MYA-565) (Filobasidiella neoformans), this protein is Cytosolic Fe-S cluster assembly factor NAR1 (NAR1).